The chain runs to 743 residues: Protein will decrease acetylation (743 aa).

WD repeat units follow at residues 389-428 (ERSR…CRGK), 493-524 (LRGH…MRCW), 535-576 (YRSH…ALII), 577-618 (YAGH…LMRV), 619-660 (FADC…QLAE), and 661-702 (LKDH…PMSD).

Belongs to the WD repeat TAF5 family. Component of the Spt-Ada-Gcn5 acetyltransferase (SAGA) complex consisting of wda/Taf5L, Saf6, Taf9, Taf10b, Taf12, Ada1, Spt3, Spt7, Spt20, Sf3b3, Sf3b5, Nipped-A/Tra1, a histone acetyltransferase (HAT) module made up of Gcn5, Ada2b (Isoform B), Ada3 and Sgf29, and a deubiquitinase (DUB) module made up of not/nonstop, Sgf11 and e(y)2 tethered to SAGA by Atxn7. Not essential for the assembly or integrity of the SAGA complex. Not a component of the Ada2a-containing ATAC complex.

It localises to the nucleus. Its subcellular location is the chromosome. Functionally, component of the transcription regulatory complex SAGA, a multiprotein complex that activates transcription by remodeling chromatin and mediating histone acetylation and deubiquitination. The SAGA complex predominantly acetylates histone H3. Involved in acetylation of histone H3 on 'Lys-10' (H3K9ac) by the SAGA complex in the larval central nervous system. Involved in SAGA complex coactivator functions. Required for oogenesis. This chain is Protein will decrease acetylation, found in Drosophila melanogaster (Fruit fly).